A 137-amino-acid polypeptide reads, in one-letter code: Ribonuclease VapC18 (137 aa).

The PINc domain occupies 4–126 (CVDTSAWHHA…YDRVAAITGQ (123 aa)). Mg(2+) is bound by residues aspartate 6 and aspartate 96.

It belongs to the PINc/VapC protein family. Mg(2+) is required as a cofactor.

Toxic component of a type II toxin-antitoxin (TA) system. An RNase. The cognate antitoxin is VapB18. The polypeptide is Ribonuclease VapC18 (Mycobacterium tuberculosis (strain ATCC 25618 / H37Rv)).